Here is a 322-residue protein sequence, read N- to C-terminus: Ribonuclease Z (322 aa).

H62, H64, D66, H67, H143, D215, and H273 together coordinate Zn(2+). D66 acts as the Proton acceptor in catalysis. Positions 300–314 are enriched in basic and acidic residues; it reads ELRRYELDPREKEPD. The interval 300–322 is disordered; the sequence is ELRRYELDPREKEPDPVGPADES.

It belongs to the RNase Z family. As to quaternary structure, homodimer. Zn(2+) serves as cofactor.

It carries out the reaction Endonucleolytic cleavage of RNA, removing extra 3' nucleotides from tRNA precursor, generating 3' termini of tRNAs. A 3'-hydroxy group is left at the tRNA terminus and a 5'-phosphoryl group is left at the trailer molecule.. Zinc phosphodiesterase, which displays some tRNA 3'-processing endonuclease activity. Probably involved in tRNA maturation, by removing a 3'-trailer from precursor tRNA. This chain is Ribonuclease Z, found in Salinibacter ruber (strain DSM 13855 / M31).